A 209-amino-acid polypeptide reads, in one-letter code: Ribosomal RNA large subunit methyltransferase E (209 aa).

S-adenosyl-L-methionine is bound by residues Gly63, Trp65, Asp83, Asp99, and Asp124. Lys164 serves as the catalytic Proton acceptor.

The protein belongs to the class I-like SAM-binding methyltransferase superfamily. RNA methyltransferase RlmE family.

It localises to the cytoplasm. It carries out the reaction uridine(2552) in 23S rRNA + S-adenosyl-L-methionine = 2'-O-methyluridine(2552) in 23S rRNA + S-adenosyl-L-homocysteine + H(+). Functionally, specifically methylates the uridine in position 2552 of 23S rRNA at the 2'-O position of the ribose in the fully assembled 50S ribosomal subunit. This Colwellia psychrerythraea (strain 34H / ATCC BAA-681) (Vibrio psychroerythus) protein is Ribosomal RNA large subunit methyltransferase E.